Reading from the N-terminus, the 1128-residue chain is Mastermind-like protein 2 (1128 aa).

2 disordered regions span residues 1 to 22 and 81 to 167; these read MGDT…GAGL and QHGQ…GDQR. Positions 12 to 22 are enriched in gly residues; sequence GGLGGAPGAGL. A compositionally biased stretch (low complexity) spans 113-122; that stretch reads PTASQTAAPA. A Phosphoserine modification is found at serine 177. Disordered stretches follow at residues 343 to 509, 521 to 649, 677 to 714, 758 to 794, and 1039 to 1073; these read FNID…GSNQ, SPSA…SNQP, QVSQ…GYMN, QDQI…GSST, and GTGL…QGTD. Polar residues-rich tracts occupy residues 347-357 and 374-387; these read LGQQSQRSTPR and GLTQ…QLRP. Low complexity predominate over residues 395–426; the sequence is SMASSGLSASSPIPSVPQSQAQPPPATGAARA. Polar residues predominate over residues 431–446; the sequence is QEVSHAQQLKQIAANR. 2 stretches are compositionally biased toward low complexity: residues 453-473 and 484-497; these read HQQQ…SAGP and PSPS…SPQS. A compositionally biased stretch (polar residues) spans 566 to 584; it reads NSDQANQQMPSVLPSQSKP. Positions 590 to 649 are enriched in low complexity; that stretch reads TQQQPQQSSITVQPQQQQQQPQQQQQPQQQQQPQPQQQQQQQPQAQQPAAQPTQPLSNQP. Polar residues-rich tracts occupy residues 677 to 695, 778 to 794, and 1039 to 1052; these read QVSQ…QNAG, NVGN…GSST, and GTGL…SQPP.

It belongs to the mastermind family. As to quaternary structure, interacts through its N-terminal region with the ankyrin repeat region of the Notch proteins NOTCH1, NOTCH2, NOTCH3 and NOTCH4. Forms a DNA-binding complex with Notch proteins and RBPSUH/RBP-J kappa.

It is found in the nucleus speckle. Functionally, acts as a transcriptional coactivator for NOTCH proteins. Has been shown to amplify NOTCH-induced transcription of HES1. Potentiates activation by NOTCH3 and NOTCH4 more efficiently than MAML1 or MAML3. This chain is Mastermind-like protein 2 (MAML2), found in Bos taurus (Bovine).